A 3072-amino-acid chain; its full sequence is Eukaryotic translation initiation factor 2-alpha kinase PK4 (3072 aa).

Residues 1 to 106 (MCNFIKKGIR…EFRWLINKLE (106 aa)) are Cytoplasmic-facing. The helical transmembrane segment at 107-127 (IIYFYFFCHLLLLCIFQNIFL) threads the bilayer. At 128 to 1643 (LTYMSKEYFL…FTSIRYKRRR (1516 aa)) the chain is on the lumenal side. The interval 383-402 (KEKCHRDEKCDRGENYDRGE) is disordered. Residues 576-610 (KKKILDENDMITIDNNIDKKENILFPYFHMEILKD) form a 10 X 7 AA tandem repeat of D-K-N-[GE]-L-D-[GD] region. Residues 970-1010 (QYEDNNDNDNNKNDNNKNDNNKNDNNKNDNNNNNNNNNNNS) form a disordered region. The segment covering 978 to 996 (DNNKNDNNKNDNNKNDNNK) has biased composition (basic and acidic residues). The span at 997–1009 (NDNNNNNNNNNNN) shows a compositional bias: low complexity. Residues 1644-1664 (WYWRVFYTIMFIIFFPVLFIY) traverse the membrane as a helical segment. Residues 1665–3072 (RRIIKRRKGS…IKNENNGADK (1408 aa)) lie on the Cytoplasmic side of the membrane. Disordered regions lie at residues 1737–1766 (KNYN…SKSN) and 1917–1937 (KVGS…KDKK). The span at 1738–1766 (NYNNNNNNNNNKNNNNISNNNSNSNSKSN) shows a compositional bias: low complexity. The segment covering 1928 to 1937 (NYTDNEKDKK) has biased composition (basic and acidic residues). ATP-binding positions include 2152–2160 (IGQGGFGSV) and K2177. 3 disordered regions span residues 2316–2402 (FYSD…EGRD), 2479–2558 (RNED…KKLD), and 2691–2749 (ENDD…DDDI). A compositionally biased stretch (basic and acidic residues) spans 2326 to 2335 (KNKENPEKNH). Residues 2362–2384 (HKLKKRKNKKKKSKKKRKSKSKI) show a composition bias toward basic residues. Repeat copies occupy residues 2483–2489 (DKNGLDG), 2490–2496 (DKNGLDG), 2497–2503 (DKNGLDG), 2504–2510 (DKNGLDG), 2511–2517 (DKNGLDG), 2518–2524 (DKNELDG), 2525–2531 (DKNGLDG), 2532–2538 (DKNGLDG), 2539–2545 (DKNGLDG), and 2546–2552 (DKNELDD). Positions 2627 to 2998 (TNVESINTNG…KIKVLLDPHL (372 aa)) constitute a Protein kinase domain. Residues 2692 to 2702 (NDDDDDDDDDN) show a composition bias toward acidic residues. D2835 functions as the Proton acceptor in the catalytic mechanism. T2902 carries the phosphothreonine modification.

Belongs to the protein kinase superfamily. Ser/Thr protein kinase family. GCN2 subfamily. May form oligomers in response to stress; oligomerization may result in catalytic activity. Interacts with BIP; the interaction is disrupted in response to stress. Post-translationally, auto-phosphorylated.

It localises to the endoplasmic reticulum membrane. It carries out the reaction L-seryl-[protein] + ATP = O-phospho-L-seryl-[protein] + ADP + H(+). The catalysed reaction is L-threonyl-[protein] + ATP = O-phospho-L-threonyl-[protein] + ADP + H(+). Its activity is regulated as follows. Dissociation from BIP and oligomerization, may results autophosphorylation and kinase activity induction. Functionally, during the asexual blood stage, phosphorylates translation factor eIF2alpha in late schizonts resulting in protein translation inhibition. Plays a role in trophozoite differentiation into schizonts. This is Eukaryotic translation initiation factor 2-alpha kinase PK4 from Plasmodium falciparum (isolate 3D7).